Consider the following 736-residue polypeptide: Subtilisin-like protease SBT4.6 (736 aa).

The N-terminal stretch at 1 to 24 is a signal peptide; it reads MATAVSYCLLSCIFALLVVSFASA. Residues 25-111 constitute a propeptide, activation peptide; sequence GKDDQDKQVY…VFPSKNLNLQ (87 aa). An Inhibitor I9 domain is found at 33–110; that stretch reads VYIVYMGALP…SVFPSKNLNL (78 aa). A Peptidase S8 domain is found at 115-589; it reads SWNFMGLKEG…AGHVDPIAAI (475 aa). Catalysis depends on D143, which acts as the Charge relay system. N174 carries N-linked (GlcNAc...) asparagine glycosylation. Catalysis depends on H204, which acts as the Charge relay system. Residue N227 is glycosylated (N-linked (GlcNAc...) asparagine). In terms of domain architecture, PA spans 362–442; the sequence is KYPLVYGKSA…PVSVLSEDDY (81 aa). N-linked (GlcNAc...) asparagine glycosylation is present at N450. S527 acts as the Charge relay system in catalysis. Residues N564, N598, N610, and N668 are each glycosylated (N-linked (GlcNAc...) asparagine).

This sequence belongs to the peptidase S8 family. The C-terminal propeptide is autocleaved.

The protein localises to the secreted. The chain is Subtilisin-like protease SBT4.6 from Arabidopsis thaliana (Mouse-ear cress).